Reading from the N-terminus, the 424-residue chain is UPF0053 protein MG146 homolog (424 aa).

In terms of domain architecture, CNNM transmembrane spans 6 to 191 (SGGLLALIII…EQNGLFTKED (186 aa)). 4 consecutive transmembrane segments (helical) span residues 7 to 27 (GGLL…SAVV), 71 to 91 (LITI…ILFL), 101 to 121 (AISS…LCEI), and 135 to 155 (LVYF…ITKL). 2 CBS domains span residues 210–270 (MIKW…NEPF) and 275–335 (LLYP…EHDE).

The protein belongs to the UPF0053 family.

Its subcellular location is the cell membrane. This chain is UPF0053 protein MG146 homolog, found in Mycoplasma pneumoniae (strain ATCC 29342 / M129 / Subtype 1) (Mycoplasmoides pneumoniae).